The chain runs to 448 residues: Homogentisate 1,2-dioxygenase (448 aa).

The Proton acceptor role is filled by His-303. Fe cation-binding residues include His-346 and Glu-352. Residues Tyr-361 and His-382 each contribute to the homogentisate site. His-382 is a binding site for Fe cation.

Belongs to the homogentisate dioxygenase family. Hexamer; dimer of trimers. Fe cation serves as cofactor.

It carries out the reaction homogentisate + O2 = 4-maleylacetoacetate + H(+). The protein operates within amino-acid degradation; L-phenylalanine degradation; acetoacetate and fumarate from L-phenylalanine: step 4/6. In terms of biological role, involved in the catabolism of homogentisate (2,5-dihydroxyphenylacetate or 2,5-OH-PhAc), a central intermediate in the degradation of phenylalanine and tyrosine. Catalyzes the oxidative ring cleavage of the aromatic ring of homogentisate to yield maleylacetoacetate. This is Homogentisate 1,2-dioxygenase from Rhodopseudomonas palustris (strain ATCC BAA-98 / CGA009).